The primary structure comprises 333 residues: Fructose-1,6-bisphosphatase class 1 1 (333 aa).

Residues Glu-81, Asp-100, Leu-102, and Asp-103 each coordinate Mg(2+). Residues Asp-103–Ser-106 and Asn-191 each bind substrate. A Mg(2+)-binding site is contributed by Glu-263.

Belongs to the FBPase class 1 family. In terms of assembly, homotetramer. The cofactor is Mg(2+).

The protein localises to the cytoplasm. The enzyme catalyses beta-D-fructose 1,6-bisphosphate + H2O = beta-D-fructose 6-phosphate + phosphate. It functions in the pathway carbohydrate biosynthesis; Calvin cycle. The polypeptide is Fructose-1,6-bisphosphatase class 1 1 (Cereibacter sphaeroides (strain ATCC 17029 / ATH 2.4.9) (Rhodobacter sphaeroides)).